The primary structure comprises 75 residues: Cytochrome c oxidase subunit 6C (75 aa).

Residues 1-13 lie on the Mitochondrial matrix side of the membrane; sequence MAPEVLPKPRMRG. A helical membrane pass occupies residues 14 to 54; it reads LLARRLRNHMAVAFVLSLGVAALYKFRVADQRKKAYADFYR. Over 55–75 the chain is Mitochondrial intermembrane; it reads NYDVMKDFEEMRKAGIFQSVK.

This sequence belongs to the cytochrome c oxidase subunit 6c family. In terms of assembly, component of the cytochrome c oxidase (complex IV, CIV), a multisubunit enzyme composed of 14 subunits. The complex is composed of a catalytic core of 3 subunits MT-CO1, MT-CO2 and MT-CO3, encoded in the mitochondrial DNA, and 11 supernumerary subunits COX4I1 (or COX4I2), COX5A, COX5B, COX6A1 (or COX6A2), COX6B1 (or COX6B2), COX6C, COX7A2 (or COX7A1), COX7B, COX7C, COX8A and NDUFA4, which are encoded in the nuclear genome. The complex exists as a monomer or a dimer and forms supercomplexes (SCs) in the inner mitochondrial membrane with NADH-ubiquinone oxidoreductase (complex I, CI) and ubiquinol-cytochrome c oxidoreductase (cytochrome b-c1 complex, complex III, CIII), resulting in different assemblies (supercomplex SCI(1)III(2)IV(1) and megacomplex MCI(2)III(2)IV(2)).

The protein resides in the mitochondrion inner membrane. It functions in the pathway energy metabolism; oxidative phosphorylation. Component of the cytochrome c oxidase, the last enzyme in the mitochondrial electron transport chain which drives oxidative phosphorylation. The respiratory chain contains 3 multisubunit complexes succinate dehydrogenase (complex II, CII), ubiquinol-cytochrome c oxidoreductase (cytochrome b-c1 complex, complex III, CIII) and cytochrome c oxidase (complex IV, CIV), that cooperate to transfer electrons derived from NADH and succinate to molecular oxygen, creating an electrochemical gradient over the inner membrane that drives transmembrane transport and the ATP synthase. Cytochrome c oxidase is the component of the respiratory chain that catalyzes the reduction of oxygen to water. Electrons originating from reduced cytochrome c in the intermembrane space (IMS) are transferred via the dinuclear copper A center (CU(A)) of subunit 2 and heme A of subunit 1 to the active site in subunit 1, a binuclear center (BNC) formed by heme A3 and copper B (CU(B)). The BNC reduces molecular oxygen to 2 water molecules using 4 electrons from cytochrome c in the IMS and 4 protons from the mitochondrial matrix. This is Cytochrome c oxidase subunit 6C (COX6C) from Homo sapiens (Human).